The sequence spans 188 residues: Tumor necrosis factor alpha-induced protein 8-like protein (188 aa).

This sequence belongs to the TNFAIP8 family.

This is Tumor necrosis factor alpha-induced protein 8-like protein from Drosophila pseudoobscura pseudoobscura (Fruit fly).